A 230-amino-acid chain; its full sequence is Ribonuclease 3 (230 aa).

An RNase III domain is found at 7 to 134 (LEELESKLGI…VIAAIYLDKG (128 aa)). Glu47 is a binding site for Mg(2+). Asp51 is a catalytic residue. Mg(2+)-binding residues include Asp120 and Glu123. Glu123 is a catalytic residue. Residues 161-230 (DYKTRLQEIL…ACKALKGLDN (70 aa)) enclose the DRBM domain.

It belongs to the ribonuclease III family. Homodimer. Requires Mg(2+) as cofactor.

The protein resides in the cytoplasm. It carries out the reaction Endonucleolytic cleavage to 5'-phosphomonoester.. Functionally, digests double-stranded RNA. Involved in the processing of primary rRNA transcript to yield the immediate precursors to the large and small rRNAs (23S and 16S). Processes some mRNAs, and tRNAs when they are encoded in the rRNA operon. Processes pre-crRNA and tracrRNA of type II CRISPR loci if present in the organism. The polypeptide is Ribonuclease 3 (Clostridium acetobutylicum (strain ATCC 824 / DSM 792 / JCM 1419 / IAM 19013 / LMG 5710 / NBRC 13948 / NRRL B-527 / VKM B-1787 / 2291 / W)).